The primary structure comprises 374 residues: tRNA-specific 2-thiouridylase MnmA (374 aa).

Residues 15–22 and methionine 41 contribute to the ATP site; that span reads GMSGGVDS. An interaction with target base in tRNA region spans residues 101 to 103; that stretch reads NPD. Cysteine 106 functions as the Nucleophile in the catalytic mechanism. Cysteine 106 and cysteine 206 are oxidised to a cystine. Glycine 130 is an ATP binding site. The segment at 156–158 is interaction with tRNA; sequence KDQ. Cysteine 206 (cysteine persulfide intermediate) is an active-site residue. The interval 324-325 is interaction with tRNA; sequence RY.

The protein belongs to the MnmA/TRMU family.

The protein localises to the cytoplasm. It catalyses the reaction S-sulfanyl-L-cysteinyl-[protein] + uridine(34) in tRNA + AH2 + ATP = 2-thiouridine(34) in tRNA + L-cysteinyl-[protein] + A + AMP + diphosphate + H(+). In terms of biological role, catalyzes the 2-thiolation of uridine at the wobble position (U34) of tRNA, leading to the formation of s(2)U34. This is tRNA-specific 2-thiouridylase MnmA from Aromatoleum aromaticum (strain DSM 19018 / LMG 30748 / EbN1) (Azoarcus sp. (strain EbN1)).